Here is a 90-residue protein sequence, read N- to C-terminus: Large ribosomal subunit protein bL31B (90 aa).

Belongs to the bacterial ribosomal protein bL31 family. Type B subfamily. As to quaternary structure, part of the 50S ribosomal subunit.

In Pseudomonas fluorescens (strain SBW25), this protein is Large ribosomal subunit protein bL31B.